Reading from the N-terminus, the 190-residue chain is Putative resolvase R80 (190 aa).

Positions 11 to 30 (SSVLGVHQRTLYQWDKKGWI) form a DNA-binding region, H-T-H motif. The 130-residue stretch at 61 to 190 (LSICYVRVSS…RNGSRKYSNK (130 aa)) folds into the Resolvase/invertase-type recombinase catalytic domain. Residues 67 to 92 (RVSSNSQKDDLERQIKFMKKKYPNHT) adopt a coiled-coil conformation. The active-site O-(5'-phospho-DNA)-serine intermediate is the Ser69.

This sequence belongs to the site-specific recombinase resolvase family.

Its function is as follows. Resolvase catalyzes the resolution (a site-specific recombination) of the cointegrated replicon to yield the final transposition products. This chain is Putative resolvase R80, found in Acanthamoeba polyphaga mimivirus (APMV).